The primary structure comprises 72 residues: Large ribosomal subunit protein uL29 (72 aa).

Belongs to the universal ribosomal protein uL29 family.

This is Large ribosomal subunit protein uL29 from Prochlorococcus marinus (strain MIT 9312).